The chain runs to 430 residues: Signal recognition particle receptor FtsY (430 aa).

The segment at 75-95 is disordered; that stretch reads DTGELPAVGDDATVPRDSPRH. Residues 238-245, 320-324, and 382-385 contribute to the GTP site; these read GVNGTGKT, DTAGR, and TKLD.

The protein belongs to the GTP-binding SRP family. FtsY subfamily. Part of the signal recognition particle protein translocation system, which is composed of SRP and FtsY.

It localises to the cell membrane. The protein resides in the cytoplasm. It carries out the reaction GTP + H2O = GDP + phosphate + H(+). Involved in targeting and insertion of nascent membrane proteins into the cytoplasmic membrane. Acts as a receptor for the complex formed by the signal recognition particle (SRP) and the ribosome-nascent chain (RNC). In Mycobacterium leprae (strain TN), this protein is Signal recognition particle receptor FtsY.